We begin with the raw amino-acid sequence, 1017 residues long: Pikachurin (1017 aa).

An N-terminal signal peptide occupies residues 1-24 (MDLIRGVLLRLLLLASSLGPGAVS). Fibronectin type-III domains follow at residues 37 to 136 (PPLD…TLSQ) and 144 to 239 (APQQ…TLCP). Asn47 carries an N-linked (GlcNAc...) asparagine glycan. An EGF-like 1 domain is found at 343 to 381 (FDMPCDETLCSADSFCVNDYTWGGSRCQCTLGKGGESCS). Disulfide bonds link Cys347/Cys358, Cys352/Cys369, Cys371/Cys380, Cys534/Cys564, Cys569/Cys580, Cys574/Cys590, Cys592/Cys601, Cys788/Cys799, Cys793/Cys808, Cys810/Cys819, and Cys987/Cys1014. Residues 386–564 (IQYPQFFGHS…ALSGADVGEC (179 aa)) enclose the Laminin G-like 1 domain. 2 consecutive EGF-like domains span residues 565-602 (SSGICDEASCIHGGTCTAIKADSYICLCPLGFKGRHCE) and 784-820 (AAHPCVRAPCAHGGSCRPRKEGYDCDCPLGFEGLHCQ). Residues 609-788 (IPQFRESLRS…VNVENAAHPC (180 aa)) form the Laminin G-like 2 domain. A Laminin G-like 3 domain is found at 835–1014 (IEIPQFIGRS…AVDGKNINTC (180 aa)).

Interacts with DAG1 alpha-dystroglycan. Interacts with GPR158 and GPR179; transsynaptic interaction is required for synaptic organization of photoreceptor cells. In terms of processing, O-glycosylated; contains chondroitin sulfate and heparan sulfate.

It is found in the secreted. The protein resides in the extracellular space. Its subcellular location is the extracellular matrix. The protein localises to the synaptic cleft. It localises to the presynaptic active zone. In terms of biological role, involved in both the retinal photoreceptor ribbon synapse formation and physiological functions of visual perception. Plays a key role in the synaptic organization of photoreceptors by mediating transsynaptic interaction between alpha-dystroglycan and GPR179 on the postsynaptic membrane. Necessary for proper bipolar dendritic tip apposition to the photoreceptor ribbon synapse. Promotes matrix assembly and cell adhesiveness. The polypeptide is Pikachurin (EGFLAM) (Homo sapiens (Human)).